The following is a 207-amino-acid chain: Large ribosomal subunit protein uL4 (207 aa).

Positions 49 to 75 are disordered; that stretch reads HAVKNRSAVSGGGRKPWKQKGTGRARA.

Belongs to the universal ribosomal protein uL4 family. Part of the 50S ribosomal subunit.

One of the primary rRNA binding proteins, this protein initially binds near the 5'-end of the 23S rRNA. It is important during the early stages of 50S assembly. It makes multiple contacts with different domains of the 23S rRNA in the assembled 50S subunit and ribosome. Functionally, forms part of the polypeptide exit tunnel. The protein is Large ribosomal subunit protein uL4 of Leuconostoc mesenteroides subsp. mesenteroides (strain ATCC 8293 / DSM 20343 / BCRC 11652 / CCM 1803 / JCM 6124 / NCDO 523 / NBRC 100496 / NCIMB 8023 / NCTC 12954 / NRRL B-1118 / 37Y).